A 335-amino-acid polypeptide reads, in one-letter code: Glyceraldehyde-3-phosphate dehydrogenase 2 (335 aa).

NAD(+)-binding positions include 13-14, Asp35, and Arg80; that span reads RI. Residues Ser125 and Ser151 each carry the phosphoserine modification. D-glyceraldehyde 3-phosphate is bound at residue 151 to 153; sequence SCT. The active-site Nucleophile is Cys152. Thr153, Thr154, Thr182, and Thr184 each carry phosphothreonine. A D-glyceraldehyde 3-phosphate-binding site is contributed by Thr182. Residues Ser192, Ser203, and Ser209 each carry the phosphoserine modification. At Thr211 the chain carries Phosphothreonine. Residues 211 to 212 and Arg234 contribute to the D-glyceraldehyde 3-phosphate site; that span reads TG. Thr237 carries the post-translational modification Phosphothreonine. Position 241 is a phosphoserine (Ser241). Asn316 serves as a coordination point for NAD(+).

Belongs to the glyceraldehyde-3-phosphate dehydrogenase family. In terms of assembly, homotetramer.

It localises to the cytoplasm. The catalysed reaction is D-glyceraldehyde 3-phosphate + phosphate + NAD(+) = (2R)-3-phospho-glyceroyl phosphate + NADH + H(+). It functions in the pathway carbohydrate degradation; glycolysis; pyruvate from D-glyceraldehyde 3-phosphate: step 1/5. The protein is Glyceraldehyde-3-phosphate dehydrogenase 2 (gpd3) of Schizosaccharomyces pombe (strain 972 / ATCC 24843) (Fission yeast).